A 148-amino-acid chain; its full sequence is NADPH-dependent 7-cyano-7-deazaguanine reductase (148 aa).

Cys-50 acts as the Thioimide intermediate in catalysis. The active-site Proton donor is the Asp-57. Substrate-binding positions include 72–74 and 91–92; these read VES and HE.

The protein belongs to the GTP cyclohydrolase I family. QueF type 1 subfamily.

The protein localises to the cytoplasm. It catalyses the reaction 7-aminomethyl-7-carbaguanine + 2 NADP(+) = 7-cyano-7-deazaguanine + 2 NADPH + 3 H(+). It participates in tRNA modification; tRNA-queuosine biosynthesis. In terms of biological role, catalyzes the NADPH-dependent reduction of 7-cyano-7-deazaguanine (preQ0) to 7-aminomethyl-7-deazaguanine (preQ1). The chain is NADPH-dependent 7-cyano-7-deazaguanine reductase from Helicobacter pylori (strain G27).